The following is a 257-amino-acid chain: Type III pantothenate kinase (257 aa).

6–13 (DCGNTNTV) lines the ATP pocket. Position 107-110 (107-110 (GPDR)) interacts with substrate. Catalysis depends on aspartate 109, which acts as the Proton acceptor. Aspartate 129 lines the K(+) pocket. Position 132 (threonine 132) interacts with ATP. Threonine 184 provides a ligand contact to substrate.

It belongs to the type III pantothenate kinase family. In terms of assembly, homodimer. It depends on NH4(+) as a cofactor. Requires K(+) as cofactor.

It localises to the cytoplasm. It catalyses the reaction (R)-pantothenate + ATP = (R)-4'-phosphopantothenate + ADP + H(+). It functions in the pathway cofactor biosynthesis; coenzyme A biosynthesis; CoA from (R)-pantothenate: step 1/5. Its function is as follows. Catalyzes the phosphorylation of pantothenate (Pan), the first step in CoA biosynthesis. The chain is Type III pantothenate kinase from Roseobacter denitrificans (strain ATCC 33942 / OCh 114) (Erythrobacter sp. (strain OCh 114)).